We begin with the raw amino-acid sequence, 209 residues long: Ribosomal RNA large subunit methyltransferase E (209 aa).

Gly-63, Trp-65, Asp-83, Asp-99, and Asp-124 together coordinate S-adenosyl-L-methionine. Residue Lys-164 is the Proton acceptor of the active site.

It belongs to the class I-like SAM-binding methyltransferase superfamily. RNA methyltransferase RlmE family.

It localises to the cytoplasm. The catalysed reaction is uridine(2552) in 23S rRNA + S-adenosyl-L-methionine = 2'-O-methyluridine(2552) in 23S rRNA + S-adenosyl-L-homocysteine + H(+). Specifically methylates the uridine in position 2552 of 23S rRNA at the 2'-O position of the ribose in the fully assembled 50S ribosomal subunit. This Baumannia cicadellinicola subsp. Homalodisca coagulata protein is Ribosomal RNA large subunit methyltransferase E.